The primary structure comprises 307 residues: Ribonuclease Z (307 aa).

Zn(2+) contacts are provided by histidine 63, histidine 65, aspartate 67, histidine 68, histidine 141, aspartate 208, and histidine 266. Aspartate 67 serves as the catalytic Proton acceptor.

It belongs to the RNase Z family. As to quaternary structure, homodimer. Zn(2+) serves as cofactor.

The catalysed reaction is Endonucleolytic cleavage of RNA, removing extra 3' nucleotides from tRNA precursor, generating 3' termini of tRNAs. A 3'-hydroxy group is left at the tRNA terminus and a 5'-phosphoryl group is left at the trailer molecule.. Its function is as follows. Zinc phosphodiesterase, which displays some tRNA 3'-processing endonuclease activity. Probably involved in tRNA maturation, by removing a 3'-trailer from precursor tRNA. This Chlamydia pneumoniae (Chlamydophila pneumoniae) protein is Ribonuclease Z.